The primary structure comprises 874 residues: Alanine--tRNA ligase (874 aa).

Zn(2+) is bound by residues H562, H566, C664, and H668.

This sequence belongs to the class-II aminoacyl-tRNA synthetase family. Requires Zn(2+) as cofactor.

It is found in the cytoplasm. It carries out the reaction tRNA(Ala) + L-alanine + ATP = L-alanyl-tRNA(Ala) + AMP + diphosphate. In terms of biological role, catalyzes the attachment of alanine to tRNA(Ala) in a two-step reaction: alanine is first activated by ATP to form Ala-AMP and then transferred to the acceptor end of tRNA(Ala). Also edits incorrectly charged Ser-tRNA(Ala) and Gly-tRNA(Ala) via its editing domain. The sequence is that of Alanine--tRNA ligase from Shewanella baltica (strain OS155 / ATCC BAA-1091).